Here is a 520-residue protein sequence, read N- to C-terminus: Amine oxidase [flavin-containing] B (520 aa).

The Cytoplasmic segment spans residues 1–489; that stretch reads MNSKCDVVVV…TFLERHLPSV (489 aa). K52 is subject to N6-acetyllysine. C397 is subject to S-8alpha-FAD cysteine. Residues 490–516 form a helical; Anchor for type IV membrane protein membrane-spanning segment; the sequence is PGLLRLIRLTTVVSAVALGFLAQKRGL. Over 517–520 the chain is Mitochondrial intermembrane; that stretch reads LLRI.

It belongs to the flavin monoamine oxidase family. Monomer, homo- or heterodimer (containing two subunits of similar size). Each subunit contains a covalently bound flavin. Enzymatically active as monomer. The cofactor is FAD.

Its subcellular location is the mitochondrion outer membrane. It catalyses the reaction a secondary aliphatic amine + O2 + H2O = a primary amine + an aldehyde + H2O2. The catalysed reaction is (R)-adrenaline + O2 + H2O = (R)-3,4-dihydroxymandelaldehyde + methylamine + H2O2. It carries out the reaction a primary methyl amine + O2 + H2O = an aldehyde + H2O2 + NH4(+). The enzyme catalyses benzylamine + O2 + H2O = benzaldehyde + H2O2 + NH4(+). It catalyses the reaction dopamine + O2 + H2O = 3,4-dihydroxyphenylacetaldehyde + H2O2 + NH4(+). The catalysed reaction is tyramine + O2 + H2O = (4-hydroxyphenyl)acetaldehyde + H2O2 + NH4(+). It carries out the reaction (R)-noradrenaline + O2 + H2O = (R)-3,4-dihydroxymandelaldehyde + H2O2 + NH4(+). The enzyme catalyses 2-phenylethylamine + O2 + H2O = 2-phenylacetaldehyde + H2O2 + NH4(+). It catalyses the reaction N-acetylputrescine + O2 + H2O = 4-acetamidobutanal + H2O2 + NH4(+). Catalyzes the oxidative deamination of primary and some secondary amines such as neurotransmitters, and exogenous amines including the tertiary amine, neurotoxin 1-methyl-4-phenyl-1,2,3,6-tetrahydropyridine (MPTP), with concomitant reduction of oxygen to hydrogen peroxide and participates in the metabolism of neuroactive and vasoactive amines in the central nervous system and peripheral tissues. Preferentially degrades benzylamine and phenylethylamine. This chain is Amine oxidase [flavin-containing] B, found in Cavia porcellus (Guinea pig).